The chain runs to 105 residues: uncharacterized protein (105 aa).

This is an uncharacterized protein from Schizosaccharomyces pombe (strain 972 / ATCC 24843) (Fission yeast).